A 155-amino-acid polypeptide reads, in one-letter code: Ribosomal RNA large subunit methyltransferase H (155 aa).

Residues Leu-72, Gly-103, and 122–127 (LSDLTL) contribute to the S-adenosyl-L-methionine site.

It belongs to the RNA methyltransferase RlmH family. In terms of assembly, homodimer.

It localises to the cytoplasm. It carries out the reaction pseudouridine(1915) in 23S rRNA + S-adenosyl-L-methionine = N(3)-methylpseudouridine(1915) in 23S rRNA + S-adenosyl-L-homocysteine + H(+). Functionally, specifically methylates the pseudouridine at position 1915 (m3Psi1915) in 23S rRNA. This is Ribosomal RNA large subunit methyltransferase H from Acidovorax ebreus (strain TPSY) (Diaphorobacter sp. (strain TPSY)).